A 412-amino-acid chain; its full sequence is Serine hydroxymethyltransferase (412 aa).

(6S)-5,6,7,8-tetrahydrofolate-binding positions include Leu120 and 124-126; that span reads GHL. Lys229 carries the post-translational modification N6-(pyridoxal phosphate)lysine. 352 to 354 is a (6S)-5,6,7,8-tetrahydrofolate binding site; the sequence is SPF.

It belongs to the SHMT family. As to quaternary structure, homodimer. It depends on pyridoxal 5'-phosphate as a cofactor.

It is found in the cytoplasm. The catalysed reaction is (6R)-5,10-methylene-5,6,7,8-tetrahydrofolate + glycine + H2O = (6S)-5,6,7,8-tetrahydrofolate + L-serine. It participates in one-carbon metabolism; tetrahydrofolate interconversion. The protein operates within amino-acid biosynthesis; glycine biosynthesis; glycine from L-serine: step 1/1. Functionally, catalyzes the reversible interconversion of serine and glycine with tetrahydrofolate (THF) serving as the one-carbon carrier. This reaction serves as the major source of one-carbon groups required for the biosynthesis of purines, thymidylate, methionine, and other important biomolecules. Also exhibits THF-independent aldolase activity toward beta-hydroxyamino acids, producing glycine and aldehydes, via a retro-aldol mechanism. This Ruminiclostridium cellulolyticum (strain ATCC 35319 / DSM 5812 / JCM 6584 / H10) (Clostridium cellulolyticum) protein is Serine hydroxymethyltransferase.